The primary structure comprises 212 residues: Nitrogen regulatory protein P-II homolog (212 aa).

Low complexity-rich tracts occupy residues 1-12 (MSSPATAAAAAA), 32-46 (TTTT…SRSR), and 63-74 (PPTAARAQSAAA). The N-terminal 68 residues, 1–68 (MSSPATAAAA…PRRLPPTAAR (68 aa)), are a transit peptide targeting the chloroplast. The segment at 1–74 (MSSPATAAAA…TAARAQSAAA (74 aa)) is disordered. ATP contacts are provided by residues 117-121 (GFGAQ) and 170-173 (GDGK). Glycine 119 serves as a coordination point for Mg(2+).

This sequence belongs to the P(II) protein family. As to quaternary structure, homodimer.

The protein resides in the plastid. It localises to the chloroplast. In terms of biological role, participates in sensing carbon and organic nitrogen status and regulates some steps of primary carbon and nitrogen metabolism. In Oryza sativa subsp. japonica (Rice), this protein is Nitrogen regulatory protein P-II homolog (GLB).